The primary structure comprises 169 residues: Neudesin (169 aa).

An N-terminal signal peptide occupies residues Met1–Ala28. The Cytochrome b5 heme-binding domain occupies Val41–Phe126. N6-acetyllysine is present on Lys133. The tract at residues Asp148 to Phe169 is disordered. Residues Phe155–Phe169 show a composition bias toward basic and acidic residues.

This sequence belongs to the cytochrome b5 family. MAPR subfamily. As to quaternary structure, interacts with PINK1 and PARK7.

The protein localises to the secreted. The protein resides in the extracellular space. Its subcellular location is the mitochondrion. It is found in the endoplasmic reticulum. Acts as a neurotrophic factor in postnatal mature neurons enhancing neuronal survival. Promotes cell proliferation and neurogenesis in undifferentiated neural progenitor cells at the embryonic stage and inhibits differentiation of astrocytes. Its neurotrophic activity is exerted via MAPK1/ERK2, MAPK3/ERK1 and AKT1/AKT pathways. Neurotrophic activity is enhanced by binding to heme. Also acts as an anorexigenic neurotrophic factor that contributes to energy balance. The polypeptide is Neudesin (NENF) (Bos taurus (Bovine)).